Reading from the N-terminus, the 218-residue chain is Probable transaldolase (218 aa).

Lysine 87 (schiff-base intermediate with substrate) is an active-site residue.

The protein belongs to the transaldolase family. Type 3B subfamily.

The protein resides in the cytoplasm. It carries out the reaction D-sedoheptulose 7-phosphate + D-glyceraldehyde 3-phosphate = D-erythrose 4-phosphate + beta-D-fructose 6-phosphate. It participates in carbohydrate degradation; pentose phosphate pathway; D-glyceraldehyde 3-phosphate and beta-D-fructose 6-phosphate from D-ribose 5-phosphate and D-xylulose 5-phosphate (non-oxidative stage): step 2/3. Transaldolase is important for the balance of metabolites in the pentose-phosphate pathway. In Flavobacterium psychrophilum (strain ATCC 49511 / DSM 21280 / CIP 103535 / JIP02/86), this protein is Probable transaldolase.